Consider the following 273-residue polypeptide: MKVAIVFDSAGTLVKIMRVIKDLKKNKFICNSQTVDIVDKKKGRALVIIKEDPLKVVDKENPEKLISDLLKEVEIGISYCNPPINREGIFKDRKTKVKELQEPLNILKRYEVETGYGSALIIDTYAGEVEYTIATAGCLFKEVKETIKQLKDLGVKVFIASGDRKGFIKRLAEITGVDERYIMAEAHQELKRDLIRNLKKEGYFTIMVGDGANDVPAMIESDLAVVTLQNGNVSRRALETADIKIYNIKEIVDICKKVINGEIKGRMQIKECS.

D8 acts as the 4-aspartylphosphate intermediate in catalysis.

It belongs to the cation transport ATPase (P-type) (TC 3.A.3) family. Type IB subfamily. Mg(2+) is required as a cofactor.

Its activity is regulated as follows. Inhibited by orthovanadate. Functionally, most probably acts as a phosphatase in the cytosol. This is Soluble P-type ATPase-like phosphatase (patS) from Methanocaldococcus jannaschii (strain ATCC 43067 / DSM 2661 / JAL-1 / JCM 10045 / NBRC 100440) (Methanococcus jannaschii).